The primary structure comprises 336 residues: tRNA (guanine(37)-N(1))-methyltransferase Trm5b (336 aa).

S-adenosyl-L-methionine contacts are provided by residues Arg-186, 223–224, 251–252, and Asn-265; these read DI and DV.

This sequence belongs to the class I-like SAM-binding methyltransferase superfamily. TRM5/TYW2 family. As to quaternary structure, monomer.

The protein localises to the cytoplasm. It carries out the reaction guanosine(37) in tRNA + S-adenosyl-L-methionine = N(1)-methylguanosine(37) in tRNA + S-adenosyl-L-homocysteine + H(+). Its function is as follows. Specifically methylates the N1 position of guanosine-37 in various tRNAs. This chain is tRNA (guanine(37)-N(1))-methyltransferase Trm5b (trm5b), found in Methanocaldococcus jannaschii (strain ATCC 43067 / DSM 2661 / JAL-1 / JCM 10045 / NBRC 100440) (Methanococcus jannaschii).